The sequence spans 321 residues: Ferredoxin--NADP reductase (321 aa).

Positions 28, 36, 41, 81, 115, 274, and 315 each coordinate FAD.

Belongs to the ferredoxin--NADP reductase type 2 family. As to quaternary structure, homodimer. The cofactor is FAD.

It catalyses the reaction 2 reduced [2Fe-2S]-[ferredoxin] + NADP(+) + H(+) = 2 oxidized [2Fe-2S]-[ferredoxin] + NADPH. This is Ferredoxin--NADP reductase from Frankia alni (strain DSM 45986 / CECT 9034 / ACN14a).